The following is a 253-amino-acid chain: Shikimate dehydrogenase (NADP(+)) (253 aa).

Shikimate-binding positions include 13-15 and Thr59; that span reads SIS. Residue Lys63 is the Proton acceptor of the active site. Glu74 contributes to the NADP(+) binding site. Shikimate-binding residues include Asn83 and Asp94. Residues 115-119, 139-144, and Val199 contribute to the NADP(+) site; these read GAGGA and NRTIER. Position 201 (Tyr201) interacts with shikimate. Position 221 (Gly221) interacts with NADP(+).

The protein belongs to the shikimate dehydrogenase family. As to quaternary structure, homodimer.

The enzyme catalyses shikimate + NADP(+) = 3-dehydroshikimate + NADPH + H(+). Its pathway is metabolic intermediate biosynthesis; chorismate biosynthesis; chorismate from D-erythrose 4-phosphate and phosphoenolpyruvate: step 4/7. In terms of biological role, involved in the biosynthesis of the chorismate, which leads to the biosynthesis of aromatic amino acids. Catalyzes the reversible NADPH linked reduction of 3-dehydroshikimate (DHSA) to yield shikimate (SA). The chain is Shikimate dehydrogenase (NADP(+)) from Thermotoga maritima (strain ATCC 43589 / DSM 3109 / JCM 10099 / NBRC 100826 / MSB8).